The following is a 207-amino-acid chain: Peptidyl-tRNA hydrolase (207 aa).

A tRNA-binding site is contributed by Tyr-30. The active-site Proton acceptor is His-35. 3 residues coordinate tRNA: Tyr-81, Asn-83, and Asn-129.

It belongs to the PTH family. In terms of assembly, monomer.

It localises to the cytoplasm. It carries out the reaction an N-acyl-L-alpha-aminoacyl-tRNA + H2O = an N-acyl-L-amino acid + a tRNA + H(+). Functionally, hydrolyzes ribosome-free peptidyl-tRNAs (with 1 or more amino acids incorporated), which drop off the ribosome during protein synthesis, or as a result of ribosome stalling. Catalyzes the release of premature peptidyl moieties from peptidyl-tRNA molecules trapped in stalled 50S ribosomal subunits, and thus maintains levels of free tRNAs and 50S ribosomes. The protein is Peptidyl-tRNA hydrolase of Bordetella avium (strain 197N).